A 61-amino-acid polypeptide reads, in one-letter code: Potassium channel toxin alpha-KTx 6.9 (61 aa).

The signal sequence occupies residues 1-23 (MNAKFILLLLVVTTTTLLPDAKG). 4 cysteine pairs are disulfide-bonded: Cys-29–Cys-50, Cys-35–Cys-55, Cys-39–Cys-57, and Cys-45–Cys-60.

Belongs to the short scorpion toxin superfamily. Potassium channel inhibitor family. Alpha-KTx 06 subfamily. Expressed by the venom gland.

It is found in the secreted. Its function is as follows. Inhibits Kv1.2/KCNA2 and Kv1.3/KCNA3 voltage-gated potassium channels. This is Potassium channel toxin alpha-KTx 6.9 from Opistophthalmus carinatus (African yellow leg scorpion).